Reading from the N-terminus, the 485-residue chain is Anthranilate synthase component I-like protein (485 aa).

Residues Ser69 and 271–273 contribute to the L-tryptophan site; that span reads PFA. 306–307 serves as a coordination point for chorismate; the sequence is GT. Glu333 is a binding site for Mg(2+). Residues Arg441, 455-457, and Gly457 each bind chorismate; that span reads GAG. Glu470 serves as a coordination point for Mg(2+).

This sequence belongs to the anthranilate synthase component I family. As to quaternary structure, tetramer of two components I and two components II. It depends on Mg(2+) as a cofactor.

The enzyme catalyses chorismate + L-glutamine = anthranilate + pyruvate + L-glutamate + H(+). It participates in amino-acid biosynthesis; L-tryptophan biosynthesis; L-tryptophan from chorismate: step 1/5. This Synechocystis sp. (strain ATCC 27184 / PCC 6803 / Kazusa) protein is Anthranilate synthase component I-like protein (trpE2).